Here is a 402-residue protein sequence, read N- to C-terminus: MAAAGRAARPLVAGGRQLRVPLRWRGQVAAAAPSTKPQAEPETRKPKTGILMLNMGGPERLDDVHDFLLRLFLDRDLMTLPAQNKLAPFIAKRRTPRIQEQYSRIGGGSPIKKWTAVQGEGMVKLLDSMSPQTAPHKYYIGFRYVHPLTEEAIEEMEDDGIERAIAFTQYPQYSCSTTGSSLNAIYRYYNKKGKKPKMKWSIIDRWPTHPLLIQCFADHIQKELDLFPPDKRKDVVILFSAHSLPMSVVNRGDPYPQEVGATVQRVMEKLNHSNPYRLVWQSKVGPMPWLVPQTDETIKGLCQRGKKNMLLVPIAFTSDHIETLYELDIEYAQVLANECGVENIRRAESLNGNPLFSKALADLVCSHIQSNEICSKQLTLCCPLCVNPVCRETKAFFTNQQL.

Residues M1–P33 constitute a mitochondrion transit peptide. Protoporphyrin IX-binding residues include R94, Y102, and S109. C175 serves as a coordination point for [2Fe-2S] cluster. Active-site residues include H209 and D362. Positions 382, 385, and 390 each coordinate [2Fe-2S] cluster.

Belongs to the ferrochelatase family. As to quaternary structure, homodimer. Homotetramer. Requires [2Fe-2S] cluster as cofactor.

It is found in the mitochondrion inner membrane. It catalyses the reaction heme b + 2 H(+) = protoporphyrin IX + Fe(2+). The protein operates within porphyrin-containing compound metabolism; protoheme biosynthesis; protoheme from protoporphyrin-IX: step 1/1. Its function is as follows. Catalyzes the ferrous insertion into protoporphyrin IX. The chain is Ferrochelatase, mitochondrial from Gallus gallus (Chicken).